The chain runs to 101 residues: Small ribosomal subunit protein bS18c (101 aa).

This sequence belongs to the bacterial ribosomal protein bS18 family. As to quaternary structure, part of the 30S ribosomal subunit.

It is found in the plastid. Its subcellular location is the chloroplast. This Nymphaea alba (White water-lily) protein is Small ribosomal subunit protein bS18c.